The chain runs to 310 residues: Mitochondrial citrate transporter F (310 aa).

3 Solcar repeats span residues 23–108 (KKVH…LKNH), 115–207 (PPGL…FKRL), and 216–303 (DNMG…HKKL). A run of 6 helical transmembrane segments spans residues 29-49 (FWFG…LDLV), 85-105 (SAAI…YEEL), 122-142 (IGMA…ADVL), 186-206 (NSTR…TFKR), 222-242 (FTAS…VDVI), and 275-296 (AFRG…TFIF).

This sequence belongs to the mitochondrial carrier (TC 2.A.29) family.

Its subcellular location is the mitochondrion inner membrane. Functionally, mitochondrial transporter that does not mediate citrate export from mitochondria to cytoplasm. Its exact function has still to be determined. This chain is Mitochondrial citrate transporter F, found in Aspergillus niger (strain ATCC 1015 / CBS 113.46 / FGSC A1144 / LSHB Ac4 / NCTC 3858a / NRRL 328 / USDA 3528.7).